An 87-amino-acid polypeptide reads, in one-letter code: Histone H1.C6/H1.C9 (87 aa).

Residues 1–87 are disordered; the sequence is MSDAAVPPKK…KKAVKKAPKK (87 aa). Residues 11-87 are compositionally biased toward basic residues; it reads ASPKKASPKK…KKAVKKAPKK (77 aa).

It localises to the nucleus. It is found in the chromosome. This Trypanosoma cruzi protein is Histone H1.C6/H1.C9.